The chain runs to 187 residues: Calcium and integrin-binding family member 2 (187 aa).

EF-hand domains lie at 66-101 (RENP…LCES), 103-138 (PREL…LTKS), and 144-179 (EVVL…APDF). Ca(2+) is bound by residues aspartate 116, asparagine 118, aspartate 120, aspartate 127, aspartate 157, aspartate 159, aspartate 161, lysine 163, and aspartate 168.

In terms of assembly, monomer. Homodimer. Interacts with WHRN and MYO7A. Interacts with ITGA2B (via C-terminus cytoplasmic tail region); the interactions are stabilized/increased in a calcium and magnesium-dependent manner. Interacts with ITGA7 (via C-terminus cytoplasmic tail region); the interactions are stabilized/increased in a calcium and magnesium-dependent manner. Interacts with TMC1. Interacts with TMC2.

It is found in the cytoplasm. Its subcellular location is the cell projection. The protein localises to the stereocilium. The protein resides in the photoreceptor inner segment. It localises to the cilium. It is found in the photoreceptor outer segment. Its subcellular location is the cell membrane. The protein localises to the sarcolemma. Functionally, calcium- and integrin-binding protein that plays a role in intracellular calcium homeostasis. Acts as an auxiliary subunit of the sensory mechanoelectrical transduction (MET) channel in hair cells. Essential for mechanoelectrical transduction (MET) currents in auditory hair cells and thereby required for hearing. Regulates the function of hair cell mechanotransduction by controlling the distribution of transmembrane channel-like proteins TMC1 and TMC2, and by regulating the function of the MET channels in hair cells. Required for the maintenance of auditory hair cell stereocilia bundle morphology and function and for hair-cell survival in the cochlea. Critical for proper photoreceptor cell maintenance and function. Plays a role in intracellular calcium homeostasis by decreasing ATP-induced calcium release. The chain is Calcium and integrin-binding family member 2 (Cib2) from Rattus norvegicus (Rat).